Here is a 199-residue protein sequence, read N- to C-terminus: Chromophore lyase CpcT/CpeT (199 aa).

This sequence belongs to the CpcT/CpeT biliprotein lyase family.

Its function is as follows. Covalently attaches a chromophore to Cys residue(s) of phycobiliproteins. This chain is Chromophore lyase CpcT/CpeT, found in Prochlorococcus marinus (strain NATL1A).